The chain runs to 453 residues: tRNA modification GTPase MnmE (453 aa).

3 residues coordinate (6S)-5-formyl-5,6,7,8-tetrahydrofolate: Arg-22, Glu-79, and Lys-119. One can recognise a TrmE-type G domain in the interval 215–376 (GMKVVIAGRP…LKQHLKSLMG (162 aa)). Asn-225 is a K(+) binding site. Residues 225 to 230 (NAGKSS), 244 to 250 (TEIAGTT), 269 to 272 (DTAG), and 334 to 337 (NKAD) each bind GTP. Ser-229 is a Mg(2+) binding site. The K(+) site is built by Thr-244, Ile-246, and Thr-249. Thr-250 lines the Mg(2+) pocket. A (6S)-5-formyl-5,6,7,8-tetrahydrofolate-binding site is contributed by Lys-453.

Belongs to the TRAFAC class TrmE-Era-EngA-EngB-Septin-like GTPase superfamily. TrmE GTPase family. Homodimer. Heterotetramer of two MnmE and two MnmG subunits. The cofactor is K(+).

The protein localises to the cytoplasm. Functionally, exhibits a very high intrinsic GTPase hydrolysis rate. Involved in the addition of a carboxymethylaminomethyl (cmnm) group at the wobble position (U34) of certain tRNAs, forming tRNA-cmnm(5)s(2)U34. The polypeptide is tRNA modification GTPase MnmE (Shewanella frigidimarina (strain NCIMB 400)).